The primary structure comprises 926 residues: Tyrosine-protein phosphatase non-receptor type 4 (926 aa).

An FERM domain is found at 29–312 (VVCNILLLDN…EHHTFFRLDR (284 aa)). Disordered stretches follow at residues 380-412 (DDRLETQSLPSRSPPGTPNHRNSTFTQEGTRLR) and 430-475 (EVFV…KNSW). 2 stretches are compositionally biased toward polar residues: residues 398-408 (NHRNSTFTQEG) and 430-456 (EVFVNQRSPSSTQANSIVLESSPSQET). Serine 474 carries the post-translational modification Phosphoserine. The PDZ domain occupies 517–589 (LIRMKPDENG…DQVVLFIKAS (73 aa)). The 257-residue stretch at 655–911 (VLTQFDQLYR…RFVCEAILKV (257 aa)) folds into the Tyrosine-protein phosphatase domain. Substrate is bound by residues aspartate 820, 852 to 858 (CSAGIGR), and glutamine 896. The active-site Phosphocysteine intermediate is cysteine 852.

Belongs to the protein-tyrosine phosphatase family. Non-receptor class subfamily. As to quaternary structure, interacts with MAPK12 (via C-terminus); this interaction abolishes PTPN4 catalytic autoinhibition and thus activates the phosphatase activity. (Microbial infection) Interacts with attenuated rabies virus protein G; this interaction is required for virally-induced apoptosis. In terms of processing, highly phosphorylated on serine and threonine residues but not on tyrosines. Post-translationally, cleaved and activated by calpain I/CAPN1.

It is found in the cell membrane. Its subcellular location is the cytoplasm. The protein localises to the cytoskeleton. It carries out the reaction O-phospho-L-tyrosyl-[protein] + H2O = L-tyrosyl-[protein] + phosphate. Its function is as follows. Phosphatase that plays a role in immunity, learning, synaptic plasticity or cell homeostasis. Regulates neuronal cell homeostasis by protecting neurons against apoptosis. Negatively regulates TLR4-induced interferon beta production by dephosphorylating adapter TICAM2 and inhibiting subsequent TRAM-TRIF interaction. Also dephosphorylates the immunoreceptor tyrosine-based activation motifs/ITAMs of the TCR zeta subunit and thereby negatively regulates TCR-mediated signaling pathway. May act at junctions between the membrane and the cytoskeleton. This chain is Tyrosine-protein phosphatase non-receptor type 4 (PTPN4), found in Homo sapiens (Human).